The primary structure comprises 201 residues: Ras-related protein Rab-1B (201 aa).

Met1 is modified (N-acetylmethionine). Ser17, Gly18, Val19, Gly20, Lys21, Ser22, Cys23, Tyr33, Thr34, Glu35, Ser36, Ser39, and Thr40 together coordinate GTP. Residue Ser22 coordinates Mg(2+). A Switch 1 motif is present at residues 30–45 (DDTYTESYISTIGVDF). Residues Thr40 and Asp63 each contribute to the Mg(2+) site. Positions 64 to 83 (TAGQERGRTITSSYYRGAHG) are switch 2 region; required for interaction with REP1/CHM. Positions 65 to 80 (AGQERGRTITSSYYRG) match the Switch 2 motif. The GTP site is built by Gly66, Asn121, Lys122, Asp124, Ser151, Ala152, and Lys153. The tract at residues 173–201 (MGPGAASGGERPNLKIDSTPVKQAGGGCC) is disordered. Residues Cys200 and Cys201 are each lipidated (S-geranylgeranyl cysteine). Position 201 is a cysteine methyl ester (Cys201).

This sequence belongs to the small GTPase superfamily. Rab family. As to quaternary structure, interacts with MICAL1 and MICAL2. Interacts (in GTP-bound form) with MICALCL, MICAL1 and MILCAL3. Interacts with GDI1; the interaction requires the GDP-bound state. Interacts with CHM/REP1; the interaction requires the GDP-bound form and is necessary for prenylation by GGTase II. Interacts with RabGAP TBC1D20. Interacts (in GDP-bound form) with lipid phosphatase MTMR6 (via GRAM domain); the interaction regulates MTMR6 recruitment to the endoplasmic reticulum-Golgi intermediate compartment. Interacts (in GDP-bound form) with lipid phosphatase MTMR7. The cofactor is Mg(2+). In terms of processing, prenylated; by GGTase II, only after interaction of the substrate with Rab escort protein 1 (REP1).

The protein resides in the cytoplasm. It localises to the membrane. Its subcellular location is the preautophagosomal structure membrane. The protein localises to the perinuclear region. The catalysed reaction is GTP + H2O = GDP + phosphate + H(+). With respect to regulation, regulated by guanine nucleotide exchange factors (GEFs) which promote the exchange of bound GDP for free GTP. Regulated by GTPase activating proteins (GAPs) including TBC1D20 which increases the GTP hydrolysis activity. Inhibited by GDP dissociation inhibitors (GDIs). In terms of biological role, the small GTPases Rab are key regulators of intracellular membrane trafficking, from the formation of transport vesicles to their fusion with membranes. Rabs cycle between an inactive GDP-bound form and an active GTP-bound form that is able to recruit to membranes different set of downstream effectors directly responsible for vesicle formation, movement, tethering and fusion. Plays a role in the initial events of the autophagic vacuole development which take place at specialized regions of the endoplasmic reticulum. Regulates vesicular transport between the endoplasmic reticulum and successive Golgi compartments. Required to modulate the compacted morphology of the Golgi. Promotes the recruitment of lipid phosphatase MTMR6 to the endoplasmic reticulum-Golgi intermediate compartment. This is Ras-related protein Rab-1B (RAB1B) from Sus scrofa (Pig).